The sequence spans 710 residues: Gastrulation-defective protein 3 (710 aa).

Residues 597 to 615 form a helical membrane-spanning segment; sequence AYYVFTVLALIISNFPTIV.

It is found in the membrane. This is Gastrulation-defective protein 3 (gadr-3) from Caenorhabditis elegans.